The chain runs to 290 residues: Fructokinase (290 aa).

ATP is bound at residue Thr130. Residues His153, Cys169, His172, and Cys175 each coordinate Zn(2+). ATP contacts are provided by residues Pro183 and 231 to 235 (GVMEK).

This sequence belongs to the ROK (NagC/XylR) family. In terms of assembly, homodimer. Mg(2+) serves as cofactor.

It carries out the reaction D-fructose + ATP = D-fructose 6-phosphate + ADP + H(+). Its activity is regulated as follows. Inactivated by EDTA. Inhibition by zinc ions (Potential). The sequence is that of Fructokinase (scrK) from Lactococcus lactis subsp. cremoris (Streptococcus cremoris).